The following is a 230-amino-acid chain: Androgen-dependent TFPI-regulating protein (230 aa).

Over 1–7 (MTKTTTC) the chain is Cytoplasmic. Residues 8 to 28 (LYHFVVLNWYIFLNYYIPQIG) traverse the membrane as a helical segment. Topologically, residues 29 to 45 (KDEEKLKEFHDGGRSKY) are extracellular. A helical membrane pass occupies residues 46 to 66 (LTLLNLLLQAVFFGVACLDDV). Residues 67 to 85 (LKRVIGRKDIKFITYFRDL) lie on the Cytoplasmic side of the membrane. Residues 86–106 (LFTTLAFPLSTFVFLVFWSLF) form a helical membrane-spanning segment. The Extracellular segment spans residues 107-120 (HYDRSLVYPKGLDD). Residues 121 to 141 (FFPAWVNHAMHTSIFPFSLAE) traverse the membrane as a helical segment. The Cytoplasmic portion of the chain corresponds to 142 to 155 (TVLRPHNYPSKKLG). Residues 156-173 (LSLLGACNFAYIIRILWR) traverse the membrane as a helical segment. The Extracellular segment spans residues 174–190 (YVQTGNWVYPVFASLSP). Residues 191-211 (LGIILFFSASYILSASLYLFG) traverse the membrane as a helical segment. Over 212 to 230 (EKINHWKWGATVKPRMKKN) the chain is Cytoplasmic.

This sequence belongs to the AIG1 family.

Its subcellular location is the cell membrane. The catalysed reaction is 9-hexadecanoyloxy-octadecanoate + H2O = 9-hydroxy-octadecanoate + hexadecanoate + H(+). It carries out the reaction 12-hexadecanoyloxy-octadecanoate + H2O = 12-hydroxyoctadecanoate + hexadecanoate + H(+). The enzyme catalyses 9-(9Z-hexadecenoyloxy)-octadecanoate + H2O = (9Z)-hexadecenoate + 9-hydroxy-octadecanoate + H(+). It catalyses the reaction 12-(9Z-hexadecenoyloxy)-octadecanoate + H2O = 12-hydroxyoctadecanoate + (9Z)-hexadecenoate + H(+). The catalysed reaction is 13-(9Z-hexadecenoyloxy)-octadecanoate + H2O = 13-hydroxy-octadecanoate + (9Z)-hexadecenoate + H(+). It carries out the reaction 9-octadecanoyloxy-octadecanoate + H2O = 9-hydroxy-octadecanoate + octadecanoate + H(+). The enzyme catalyses 12-octadecanoyloxy-octadecanoate + H2O = 12-hydroxyoctadecanoate + octadecanoate + H(+). It catalyses the reaction 13-octadecanoyloxy-octadecanoate + H2O = 13-hydroxy-octadecanoate + octadecanoate + H(+). The catalysed reaction is 9-(9Z-octadecenoyloxy)-octadecanoate + H2O = 9-hydroxy-octadecanoate + (9Z)-octadecenoate + H(+). It carries out the reaction 12-(9Z-octadecenoyloxy)-octadecanoate + H2O = 12-hydroxyoctadecanoate + (9Z)-octadecenoate + H(+). The enzyme catalyses 13-(9Z-octadecenoyloxy)-octadecanoate + H2O = 13-hydroxy-octadecanoate + (9Z)-octadecenoate + H(+). It catalyses the reaction 5-(9Z-octadecenoyloxy)-octadecanoate + H2O = 5-hydroxy-octadecanoate + (9Z)-octadecenoate + H(+). Functionally, hydrolyzes bioactive fatty-acid esters of hydroxy-fatty acids (FAHFAs), but not other major classes of lipids. Shows a preference for FAHFAs with branching distal from the carboxylate head group of the lipids. Regulates the expression and the cell-associated anticoagulant activity of the inhibitor TFPI in endothelial cells (in vitro). The chain is Androgen-dependent TFPI-regulating protein (Adtrp) from Rattus norvegicus (Rat).